The sequence spans 900 residues: Suppressor of activated egl-4 protein 1 (900 aa).

Disordered stretches follow at residues 1–75, 340–380, and 406–425; these read MPPP…HLPT, PVAE…SRKN, and WASTSSADEKMQTERKESLE. The segment covering 53–75 has biased composition (polar residues); that stretch reads ASGQQHRPSIMSGQSHQNNHLPT. Composition is skewed to basic and acidic residues over residues 358–377 and 412–425; these read GDMKHLMNGKKRSEDGDGPS and ADEKMQTERKESLE. The ELM2 domain occupies 451–544; the sequence is PHINLGKNYQ…AAVEDLLRSD (94 aa). One can recognise an SANT domain in the interval 560 to 611; that stretch reads NDSVLWTPDEIYQFQDAIYQSEKDFDKVAVELPGKSVKECVQFYYTWKKDCP. Positions 710 to 729 are disordered; it reads PTAPRAHHTPSASASKKGAQ. Residues 736–758 form a C2H2-type zinc finger; the sequence is FHCRLCDKCFEKVKSLNAHMKSH.

In terms of assembly, may be a component of a histone deacetylase complex containing saeg-2, saeg-1 and hda-2. May interact with egl-4. Ubiquitously expressed.

The protein resides in the nucleus. As a likely component of a histone deacetylase complex, together with saeg-2 and hda-2, functions downstream of the cAMP-dependent kinase egl-4 to regulate the expression of genes required for egg-laying and foraging. The polypeptide is Suppressor of activated egl-4 protein 1 (Caenorhabditis elegans).